The primary structure comprises 344 residues: Dihydroorotase (344 aa).

2 residues coordinate Zn(2+): H13 and H15. Substrate is bound by residues 15 to 17 and N41; that span reads HLR. Residues K98, H135, and H173 each contribute to the Zn(2+) site. An N6-carboxylysine modification is found at K98. H135 provides a ligand contact to substrate. L218 is a substrate binding site. D247 is a Zn(2+) binding site. The active site involves D247. 2 residues coordinate substrate: H251 and A263.

This sequence belongs to the metallo-dependent hydrolases superfamily. DHOase family. Class II DHOase subfamily. As to quaternary structure, homodimer. Zn(2+) is required as a cofactor.

It carries out the reaction (S)-dihydroorotate + H2O = N-carbamoyl-L-aspartate + H(+). Its pathway is pyrimidine metabolism; UMP biosynthesis via de novo pathway; (S)-dihydroorotate from bicarbonate: step 3/3. In terms of biological role, catalyzes the reversible cyclization of carbamoyl aspartate to dihydroorotate. This chain is Dihydroorotase, found in Neisseria gonorrhoeae (strain NCCP11945).